The primary structure comprises 132 residues: Small ribosomal subunit protein uS12 (132 aa).

Aspartate 89 is subject to 3-methylthioaspartic acid. Residues 106 to 132 (GVKDRKKSRSKYGTKKPKEAAKTAAKK) are disordered. A compositionally biased stretch (basic residues) spans 109–120 (DRKKSRSKYGTK).

It belongs to the universal ribosomal protein uS12 family. Part of the 30S ribosomal subunit. Contacts proteins S8 and S17. May interact with IF1 in the 30S initiation complex.

In terms of biological role, with S4 and S5 plays an important role in translational accuracy. Functionally, interacts with and stabilizes bases of the 16S rRNA that are involved in tRNA selection in the A site and with the mRNA backbone. Located at the interface of the 30S and 50S subunits, it traverses the body of the 30S subunit contacting proteins on the other side and probably holding the rRNA structure together. The combined cluster of proteins S8, S12 and S17 appears to hold together the shoulder and platform of the 30S subunit. In Thermus thermophilus (strain ATCC BAA-163 / DSM 7039 / HB27), this protein is Small ribosomal subunit protein uS12 (rpsL).